Reading from the N-terminus, the 822-residue chain is MGTKKVKISSVKRAAHLKSKKTPLSKQQQQKQKQKRDQLKSKREQGQNIFSQKARKRDNLAQRKKHNKLASLGLDPLEEDNEDGDDEMLENVADMLDGDDLALLQANKRKRKAKTTGENDPDQGQSIGLERAYASDTKKEQDAQKIKLDLLPIKSRDGQIITRTTEVDYIPKPKQKKKNEEEEEDDSEEDGDTEYEDSDDDVVNDVEAATAAPVQKLISTTDLLIARQQEIERQKYRIGIICSGLLEKPEDKMRNFHALYELMDEINPASRQANLMAVRKLAIISVTEIFKDILPEYRVGQVDTKMQTLRKATLDRVTFENALLQQFKKFLQKLEQITAQVNRRGGLRTPQTVKLATVAVQCMCDLLVAHPYFNYVQNIAQLLVYMLNCNYAEMRTAVHQCFRTVFSNDKRLEMTLFIVRRINHLIKTKQNNVHVECITCLMGLKIKNVNLDAEKENELKQKKLESHRQRLLSLSKKERKRRKKLTEVNRELEETRAEENKQAKHQKLTEIIKMVFTIYFRVLKNDPTSRVLSAILEGLAEFAHVINLDFFSDLIDVLNRILEDQDELGYRERLHCVQTIFVILSGQGEVLNIDPIRFYQHFYRNMLAVQAGKNHDDFAIILRTLDEVLVKRRRNMSQQRLMAFMKRLLTGSLHLLHNGTLATLGTIKQTFQLTSVLDNLLDTDTTIGSGRYDPELDDPEYCNAASTALYELALLARHYHPTVRRMAVHIAHGVPATGEGALPTEIGKLTSHELFTQFDSTQMAFNPTIPLPKAGQPKLKRGKHLYIRSDFKQEYGKLLQQGKVSQTKDKQTLQIDFFSALQ.

3 disordered regions span residues 1 to 86, 106 to 142, and 172 to 199; these read MGTK…DGDD, ANKRKRKAKTTGENDPDQGQSIGLERAYASDTKKEQD, and KPKQKKKNEEEEEDDSEEDGDTEYEDSD. The span at 13-23 shows a compositional bias: basic residues; the sequence is RAAHLKSKKTP. Basic and acidic residues predominate over residues 35–45; the sequence is KRDQLKSKREQ. Positions 41–48 match the Nuclear localization signal motif; that stretch reads SKREQGQN. The span at 76 to 86 shows a compositional bias: acidic residues; it reads PLEEDNEDGDD. Residues 116 to 126 show a composition bias toward polar residues; sequence TGENDPDQGQS. Over residues 181–199 the composition is skewed to acidic residues; the sequence is EEEEDDSEEDGDTEYEDSD. Residue S187 is modified to Phosphoserine. Phosphothreonine is present on T193. S198 bears the Phosphoserine mark. Residues 445-509 adopt a coiled-coil conformation; sequence KIKNVNLDAE…NKQAKHQKLT (65 aa).

It belongs to the CBF/MAK21 family.

The protein localises to the nucleus. It localises to the nucleolus. This chain is Nucleolar complex protein 3, found in Drosophila melanogaster (Fruit fly).